We begin with the raw amino-acid sequence, 263 residues long: Tryptophan synthase alpha chain (263 aa).

Catalysis depends on proton acceptor residues glutamate 41 and aspartate 52.

It belongs to the TrpA family. In terms of assembly, tetramer of two alpha and two beta chains.

It catalyses the reaction (1S,2R)-1-C-(indol-3-yl)glycerol 3-phosphate + L-serine = D-glyceraldehyde 3-phosphate + L-tryptophan + H2O. It participates in amino-acid biosynthesis; L-tryptophan biosynthesis; L-tryptophan from chorismate: step 5/5. The alpha subunit is responsible for the aldol cleavage of indoleglycerol phosphate to indole and glyceraldehyde 3-phosphate. The protein is Tryptophan synthase alpha chain of Geobacillus sp. (strain WCH70).